Consider the following 393-residue polypeptide: MPRIGTPLSPSATRILLCGCGELGKELVIELQRFGVEVIAVDRYANAPAMQVAHRSHVLDMLDGAALRAVIEQERPHYIVPEIEAIATATLVELEREGYTVIPTARAAQLTMNREGIRRLAAEELGLPTSPYRFADTLDECRAAAMALGFPCLVKPVMSSSGKGQSVLRSDADIDAAWEYAQAGGRAGRGRVIVEGFIDFDYEITLLTVRHAGGTSFCEPVGHRQEKGDYQESWQPQPMAPAALAEAKRIALAVTDALGGRGIFGVELFVKGEQVWFCEISPRPHDTGLVTLVSQDLSEFALHARAILGLPIPVIRQLGPAASAVVLVEGESTQVSFGNLAEVLAEPDTALRLFGKPGVSGQRRMGVALARDTSIDAARQKALRAAAAVKIEL.

N(1)-(5-phospho-beta-D-ribosyl)glycinamide contacts are provided by residues 22 to 23 (EL) and E82. ATP-binding positions include R114, K155, 160-165 (SSGKGQ), 195-198 (EGFI), and E203. Positions 119-308 (RLAAEELGLP…EFALHARAIL (190 aa)) constitute an ATP-grasp domain. Mg(2+) contacts are provided by E267 and E279. N(1)-(5-phospho-beta-D-ribosyl)glycinamide-binding positions include D286, K356, and 363–364 (RR).

The protein belongs to the PurK/PurT family. Homodimer.

It catalyses the reaction N(1)-(5-phospho-beta-D-ribosyl)glycinamide + formate + ATP = N(2)-formyl-N(1)-(5-phospho-beta-D-ribosyl)glycinamide + ADP + phosphate + H(+). The protein operates within purine metabolism; IMP biosynthesis via de novo pathway; N(2)-formyl-N(1)-(5-phospho-D-ribosyl)glycinamide from N(1)-(5-phospho-D-ribosyl)glycinamide (formate route): step 1/1. Involved in the de novo purine biosynthesis. Catalyzes the transfer of formate to 5-phospho-ribosyl-glycinamide (GAR), producing 5-phospho-ribosyl-N-formylglycinamide (FGAR). Formate is provided by PurU via hydrolysis of 10-formyl-tetrahydrofolate. The protein is Formate-dependent phosphoribosylglycinamide formyltransferase of Stutzerimonas stutzeri (strain A1501) (Pseudomonas stutzeri).